A 152-amino-acid chain; its full sequence is Transcriptional regulator MraZ (152 aa).

2 consecutive SpoVT-AbrB domains span residues 5 to 52 (ATMV…PLPE) and 81 to 124 (ASEC…DEQT).

Belongs to the MraZ family. As to quaternary structure, forms oligomers.

It is found in the cytoplasm. The protein localises to the nucleoid. Its function is as follows. Negatively regulates its own expression and that of the subsequent genes in the proximal part of the division and cell wall (dcw) gene cluster. Acts by binding directly to DNA. May also regulate the expression of genes outside the dcw cluster. This chain is Transcriptional regulator MraZ, found in Yersinia pseudotuberculosis serotype O:1b (strain IP 31758).